The following is an 857-amino-acid chain: Thiamine repressible genes regulatory protein thi5 (857 aa).

The zn(2)-C6 fungal-type DNA-binding region spans 38 to 64; sequence CLSCRAKKIRCSGSEPCQACIATPSQC. Disordered regions lie at residues 152-175 and 797-819; these read AVKSANVSFPSSSTPPSSDSNFSS and GHALGNPESNNSSNSFKPSHPSQ. Residues 159-175 show a composition bias toward low complexity; the sequence is SFPSSSTPPSSDSNFSS. A compositionally biased stretch (polar residues) spans 803 to 819; that stretch reads PESNNSSNSFKPSHPSQ.

It localises to the nucleus. Transcription factor that activates the nmt1 promoter. Regulation of thiamine repressible genes. Negatively regulates conjugation during meiosis, by inducing negative regulators which delay conjugation. Involved in thi1 regulation. This chain is Thiamine repressible genes regulatory protein thi5 (thi5), found in Schizosaccharomyces pombe (strain 972 / ATCC 24843) (Fission yeast).